The following is a 360-amino-acid chain: Outer membrane protein P2 (360 aa).

The first 20 residues, 1 to 20 (MKKTLAALIVGAFAASAANA), serve as a signal peptide directing secretion.

The protein belongs to the Gram-negative porin family. As to quaternary structure, homotrimer.

Its subcellular location is the cell outer membrane. Functionally, forms pores that allow passive diffusion of small molecules across the outer membrane. This chain is Outer membrane protein P2 (ompP2), found in Haemophilus influenzae.